The following is a 1612-amino-acid chain: DNA topoisomerase 2-beta (1612 aa).

Ala-2 carries the N-acetylalanine modification. Lys-3 is subject to N6-acetyllysine. Glycyl lysine isopeptide (Lys-Gly) (interchain with G-Cter in SUMO2) cross-links involve residues Lys-21 and Lys-22. Residues Asn-100, Asn-129, and 157–159 (SSN) contribute to the ATP site. Residues Lys-165 and Lys-166 each participate in a glycyl lysine isopeptide (Lys-Gly) (interchain with G-Cter in SUMO2) cross-link. Residue 170–177 (GRNGYGAK) coordinates ATP. Glycyl lysine isopeptide (Lys-Gly) (interchain with G-Cter in SUMO2) cross-links involve residues Lys-216 and Lys-287. Residues 351–353 (KKK) are interaction with DNA. Glycyl lysine isopeptide (Lys-Gly) (interchain with G-Cter in SUMO2) cross-links involve residues Lys-355 and Lys-361. 385-387 (QTK) provides a ligand contact to ATP. Residues Lys-425, Lys-427, and Lys-434 each participate in a glycyl lysine isopeptide (Lys-Gly) (interchain with G-Cter in SUMO2) cross-link. Positions 464-581 (CTLILTEGDS…SLLKHGFLEE (118 aa)) constitute a Toprim domain. Glu-470, Asp-550, and Asp-552 together coordinate Mg(2+). Residues Lys-588, Lys-593, Lys-623, Lys-631, Lys-634, Lys-664, and Lys-700 each participate in a glycyl lysine isopeptide (Lys-Gly) (interchain with G-Cter in SUMO2) cross-link. One can recognise a Topo IIA-type catalytic domain in the interval 724-1177 (IPSLVDGFKP…SPSDLWKEDL (454 aa)). The active-site O-(5'-phospho-DNA)-tyrosine intermediate is the Tyr-814. The interval 999-1008 (KLQTTLTCNS) is interaction with DNA. Lys-1080 participates in a covalent cross-link: Glycyl lysine isopeptide (Lys-Gly) (interchain with G-Cter in SUMO2). The interval 1098–1128 (AWKEAQEKAAEEEDSQNQHDDSSSDSGTPSG) is disordered. Residues Lys-1202, Lys-1205, Lys-1214, and Lys-1215 each participate in a glycyl lysine isopeptide (Lys-Gly) (interchain with G-Cter in SUMO2) cross-link. The residue at position 1224 (Ser-1224) is a Phosphoserine. Residues Lys-1238, Lys-1250, and Lys-1259 each participate in a glycyl lysine isopeptide (Lys-Gly) (interchain with G-Cter in SUMO2) cross-link. Residues 1245–1586 (LLKKKKGDPD…FTSEPPALPR (342 aa)) are disordered. Residue Thr-1280 is modified to Phosphothreonine. Residues Lys-1311 and Lys-1315 each participate in a glycyl lysine isopeptide (Lys-Gly) (interchain with G-Cter in SUMO2) cross-link. Composition is skewed to basic and acidic residues over residues 1322–1332 (PWSDDESKSES) and 1346–1358 (SLLRRAAAERPKY). 5 positions are modified to phosphoserine: Ser-1324, Ser-1328, Ser-1330, Ser-1332, and Ser-1346. Tyr-1358 is modified (phosphotyrosine). Over residues 1362–1379 (FSEEEDDDAAAADDSNDL) the composition is skewed to acidic residues. Phosphoserine is present on residues Ser-1363 and Ser-1376. A Glycyl lysine isopeptide (Lys-Gly) (interchain with G-Cter in SUMO2) cross-link involves residue Lys-1385. Phosphoserine is present on Ser-1387. Thr-1390 is subject to Phosphothreonine. Ser-1400 bears the Phosphoserine mark. Tyr-1408 is subject to Phosphotyrosine. Ser-1411 carries the phosphoserine modification. Residues 1417–1429 (ATPEKSSNDKKSQ) show a composition bias toward basic and acidic residues. Lys-1427 is covalently cross-linked (Glycyl lysine isopeptide (Lys-Gly) (interchain with G-Cter in SUMO2)). Ser-1428, Ser-1439, and Ser-1441 each carry phosphoserine. Lys-1443 is covalently cross-linked (Glycyl lysine isopeptide (Lys-Gly) (interchain with G-Cter in SUMO2)). Over residues 1443–1453 (KSEDDSAKFDS) the composition is skewed to basic and acidic residues. 3 positions are modified to phosphoserine: Ser-1448, Ser-1453, and Ser-1460. Lys-1477 participates in a covalent cross-link: Glycyl lysine isopeptide (Lys-Gly) (interchain with G-Cter in SUMO2). The tract at residues 1493-1499 (KAKRAPK) is interaction with PLSCR1. A phosphoserine mark is found at Ser-1509, Ser-1511, and Ser-1513. Over residues 1526 to 1536 (GKGRGAKKRKA) the composition is skewed to basic residues. Residues Ser-1537 and Ser-1539 each carry the phosphoserine modification. A compositionally biased stretch (basic residues) spans 1550 to 1561 (KPSKTASKKPKK). Position 1562 is a phosphothreonine (Thr-1562). Residues Ser-1563 and Ser-1568 each carry the phosphoserine modification. Phosphotyrosine is present on Tyr-1596. Phosphoserine is present on Ser-1600.

This sequence belongs to the type II topoisomerase family. Homodimer. Interacts with KIAA1210. Interacts with PLSCR1. Requires Mg(2+) as cofactor. It depends on Mn(2+) as a cofactor. Ca(2+) serves as cofactor.

The protein localises to the nucleus. It localises to the nucleolus. It is found in the nucleoplasm. It carries out the reaction ATP-dependent breakage, passage and rejoining of double-stranded DNA.. Key decatenating enzyme that alters DNA topology by binding to two double-stranded DNA molecules, generating a double-stranded break in one of the strands, passing the intact strand through the broken strand, and religating the broken strand. Plays a role in B-cell differentiation. This chain is DNA topoisomerase 2-beta (Top2b), found in Mus musculus (Mouse).